Here is a 418-residue protein sequence, read N- to C-terminus: Queuine tRNA-ribosyltransferase accessory subunit 2 (418 aa).

Cys325, Cys327, Cys330, and His356 together coordinate Zn(2+).

It belongs to the queuine tRNA-ribosyltransferase family. QTRT2 subfamily. As to quaternary structure, heterodimer of a catalytic subunit and an accessory subunit. It depends on Zn(2+) as a cofactor.

Its subcellular location is the cytoplasm. Functionally, non-catalytic subunit of the queuine tRNA-ribosyltransferase (TGT) that catalyzes the base-exchange of a guanine (G) residue with queuine (Q) at position 34 (anticodon wobble position) in tRNAs with GU(N) anticodons (tRNA-Asp, -Asn, -His and -Tyr), resulting in the hypermodified nucleoside queuosine (7-(((4,5-cis-dihydroxy-2-cyclopenten-1-yl)amino)methyl)-7-deazaguanosine). The polypeptide is Queuine tRNA-ribosyltransferase accessory subunit 2 (Drosophila erecta (Fruit fly)).